The primary structure comprises 247 residues: ATP synthase subunit a, chloroplastic (247 aa).

The next 5 membrane-spanning stretches (helical) occupy residues 38 to 58, 95 to 115, 134 to 154, 199 to 219, and 220 to 240; these read QVLITSWVVIAILLGSASIAV, VPFIGTMFLFIFVSNWSGALL, INTTVALALLTSVAYFYAGLT, LVVVVLVSLVPLVVPIPVMFL, and GLFTSGIQALIFATLAAAYIG.

It belongs to the ATPase A chain family. In terms of assembly, F-type ATPases have 2 components, CF(1) - the catalytic core - and CF(0) - the membrane proton channel. CF(1) has five subunits: alpha(3), beta(3), gamma(1), delta(1), epsilon(1). CF(0) has four main subunits: a, b, b' and c.

It localises to the plastid. The protein resides in the chloroplast thylakoid membrane. Key component of the proton channel; it plays a direct role in the translocation of protons across the membrane. The protein is ATP synthase subunit a, chloroplastic of Eucalyptus globulus subsp. globulus (Tasmanian blue gum).